We begin with the raw amino-acid sequence, 629 residues long: Tudor and KH domain-containing protein homolog (629 aa).

A helical transmembrane segment spans residues 9 to 29 (LPIALGLSLVTVTAFVAYYVL). KH domains follow at residues 46–109 (INTI…ETLI) and 119–185 (IMSE…KKLV). The segment at 198-240 (IEQSKRPPRHSSSPPSPCPSPGDRDADADAQGDVDHTRVKYKR) is disordered. Over residues 219 to 240 (GDRDADADAQGDVDHTRVKYKR) the composition is skewed to basic and acidic residues. The Tudor domain maps to 297-362 (HVSVGQVVAA…CELRADLLRL (66 aa)). The tract at residues 464 to 526 (PAPSPRPSPP…GDDSKDKDGI (63 aa)) is disordered.

Belongs to the Tdrkh family. As to quaternary structure, interacts with (symmetrically methylated) Siwi. Interacts with (symmetrically methylated) Ago3. Interacts with PNLDC1/trimmer; interaction takes place on the mitochondrial surface and recruits PNLDC1/trimmer to Siwi-bound pre-piRNAs.

It localises to the mitochondrion outer membrane. In terms of biological role, participates in the primary piRNA biogenesis pathway and is required during spermatogenesis to repress transposable elements and prevent their mobilization, which is essential for the germline integrity. The piRNA metabolic process mediates the repression of transposable elements during meiosis by forming complexes composed of piRNAs and Piwi proteins (Siwi or Ago3) and govern the methylation and subsequent repression of transposons. Required for the final steps of primary piRNA biogenesis by participating in the processing of 31-37 nt intermediates into mature piRNAs: acts by recruiting the exonuclease PNLDC1/trimmer to Siwi-bound pre-piRNAs. This Bombyx mori (Silk moth) protein is Tudor and KH domain-containing protein homolog.